The chain runs to 134 residues: Acyl-CoA thioester hydrolase YbgC (134 aa).

Residue Asp18 is part of the active site.

The protein belongs to the 4-hydroxybenzoyl-CoA thioesterase family.

The protein localises to the cell inner membrane. Functionally, thioesterase that appears to be involved in phospholipid metabolism. Some specific acyl-ACPs could be physiological substrates. Displays acyl-CoA thioesterase activity on malonyl-CoA in vitro, catalyzing the hydrolysis of the thioester bond. The protein is Acyl-CoA thioester hydrolase YbgC (ybgC) of Escherichia coli O157:H7.